The primary structure comprises 376 residues: 12-oxophytodienoate reductase 1 (376 aa).

Residues 35–37, alanine 68, and glutamine 110 contribute to the FMN site; that span reads PLT. Substrate contacts are provided by residues serine 143 and 187-190; that span reads HGAH. Tyrosine 192 functions as the Proton donor in the catalytic mechanism. Arginine 239 is an FMN binding site. Residue arginine 279 coordinates substrate. Residues glycine 309 and 330-331 each bind FMN; that span reads GR.

Belongs to the NADH:flavin oxidoreductase/NADH oxidase family. Requires FMN as cofactor. In terms of tissue distribution, constitutively expressed in roots, leaves, cotyledons, cells culture and to a lower extent in flowers.

The protein localises to the cytoplasm. The catalysed reaction is (1S,2S)-OPC-8 + NADP(+) = (9S,13S,15Z)-12-oxophyto-10,15-dienoate + NADPH + H(+). Its pathway is lipid metabolism; oxylipin biosynthesis. Functionally, specifically cleaves olefinic bonds in alpha,beta-unsaturated carbonyls and may be involved in detoxification or modification of these reactive compounds. May be involved in the biosynthesis or metabolism of oxylipin signaling molecules. In vitro, reduces 9R,13R-12-oxophyodienoic acid (9R,13R-OPDA) to 9R,13R-OPC-8:0, but not 9S,13S-OPDA, the natural precursor of jasmonic acid. Also reduces N-ethylmaleimide and maleic acid. The chain is 12-oxophytodienoate reductase 1 (OPR1) from Solanum lycopersicum (Tomato).